Consider the following 200-residue polypeptide: MGKTIGLTGSVATGKSTVSSMIQQAGIPLVDADIAARKVVEPGTEGLKEIVAYFGEEILLADGTLNRAKLGKIIFKDKEKREKLNEITHPRVKEYMLEARERFFRAGEELVFFDIPLLFESHLESLVDQIIVVWTTPETELKRLMERNNLTKEEALARINSQIGIDEKAKKADFVINNNESLEKTQKQVYTFIERFVKNK.

In terms of domain architecture, DPCK spans 4 to 200; it reads TIGLTGSVAT…TFIERFVKNK (197 aa). Residue 12–17 participates in ATP binding; the sequence is ATGKST.

The protein belongs to the CoaE family.

The protein resides in the cytoplasm. It carries out the reaction 3'-dephospho-CoA + ATP = ADP + CoA + H(+). The protein operates within cofactor biosynthesis; coenzyme A biosynthesis; CoA from (R)-pantothenate: step 5/5. Functionally, catalyzes the phosphorylation of the 3'-hydroxyl group of dephosphocoenzyme A to form coenzyme A. This chain is Dephospho-CoA kinase, found in Listeria monocytogenes serovar 1/2a (strain ATCC BAA-679 / EGD-e).